The sequence spans 815 residues: Protein-glutamine gamma-glutamyltransferase K (815 aa).

Residues 1–10 (MEGPRSDVGR) show a composition bias toward basic and acidic residues. Disordered regions lie at residues 1-48 (MEGP…SFWA) and 62-101 (DDWG…AAGD). Over residues 16-25 (WQPPTTPSPE) the composition is skewed to pro residues. Thr21 is subject to Phosphothreonine. A phosphoserine mark is found at Ser23, Ser71, Ser83, Ser91, and Ser94. Low complexity predominate over residues 66 to 78 (PEPSGSRSRGTSS). Residues 79–91 (RGRDSRGGRRPES) are compositionally biased toward basic and acidic residues. Active-site residues include Cys376, His435, and Asp458. Residues Asn498, Asp500, Glu547, and Glu552 each coordinate Ca(2+). The disordered stretch occupies residues 791 to 815 (GSGFSDAGGDSRSGENIPMAYRGGA). A Phosphoserine modification is found at Ser803.

It belongs to the transglutaminase superfamily. Transglutaminase family. As to quaternary structure, interacts with PLAAT4. Requires Ca(2+) as cofactor. Post-translationally, tyrosine-phosphorylated. Palmitoylated. In terms of processing, the membrane anchorage region possesses a cluster of five cysteines within which fatty acid(s) may become thioester-linked. It is subject to phorbol ester-stimulated phosphorylation and is hypersensitive to proteolysis, which releases the enzyme in a soluble form. Expressed in large amounts in epithelial tissues (lung, liver and kidney).

The protein localises to the membrane. It carries out the reaction L-glutaminyl-[protein] + L-lysyl-[protein] = [protein]-L-lysyl-N(6)-5-L-glutamyl-[protein] + NH4(+). Functionally, catalyzes the cross-linking of proteins and the conjugation of polyamines to proteins. Responsible for cross-linking epidermal proteins during formation of the stratum corneum. Involved in cell proliferation. In Mus musculus (Mouse), this protein is Protein-glutamine gamma-glutamyltransferase K (Tgm1).